A 408-amino-acid chain; its full sequence is E3 ubiquitin-protein ligase At1g12760 (408 aa).

The tract at residues 1–52 (MSTETTTGNSSLIPASSSSSSSDAIDPAPLLFNGDDNEGNNGGGGGERRSVR) is disordered. Over residues 10 to 34 (SSLIPASSSSSSSDAIDPAPLLFNG) the composition is skewed to low complexity. 2 consecutive transmembrane segments (helical) span residues 100 to 120 (VVVLDIVWNLAFVSVATAILV) and 133 to 153 (VWLLGYALQCVLHMVCVCVEY). Positions 160–195 (RTNRTTTTTPPRSRSSSSSSSSSSLEEEALGSRRNS) are disordered. Low complexity predominate over residues 163-183 (RTTTTTPPRSRSSSSSSSSSS). 3 consecutive transmembrane segments (helical) span residues 219 to 239 (ANTMFSFIWWIIGFYWVSAGG), 254 to 274 (IVFLGFDVFFVVFCVALACVI), and 275 to 295 (GIAVCCCLPCIIAVLYAVADQ). An RING-type; atypical zinc finger spans residues 353–394 (CCICLSAYEDGTELRELPCGHHFHCSCVDKWLYINATCPLCK).

It localises to the membrane. It catalyses the reaction S-ubiquitinyl-[E2 ubiquitin-conjugating enzyme]-L-cysteine + [acceptor protein]-L-lysine = [E2 ubiquitin-conjugating enzyme]-L-cysteine + N(6)-ubiquitinyl-[acceptor protein]-L-lysine.. The protein operates within protein modification; protein ubiquitination. In terms of biological role, mediates E2-dependent protein ubiquitination in vitro. This Arabidopsis thaliana (Mouse-ear cress) protein is E3 ubiquitin-protein ligase At1g12760.